Reading from the N-terminus, the 71-residue chain is Small ribosomal subunit protein bS21 (71 aa).

The tract at residues 37 to 71 is disordered; the sequence is HYEKPTQERKRKAAAAVKRHMKRLSREQARRRRLY. A compositionally biased stretch (basic residues) spans 45–71; it reads RKRKAAAAVKRHMKRLSREQARRRRLY.

The protein belongs to the bacterial ribosomal protein bS21 family.

This is Small ribosomal subunit protein bS21 from Alkalilimnicola ehrlichii (strain ATCC BAA-1101 / DSM 17681 / MLHE-1).